The sequence spans 62 residues: Sperm protamine P1 (62 aa).

The disordered stretch occupies residues Met-1–Tyr-62.

It belongs to the protamine P1 family. As to expression, testis.

The protein localises to the nucleus. The protein resides in the chromosome. Functionally, protamines substitute for histones in the chromatin of sperm during the haploid phase of spermatogenesis. They compact sperm DNA into a highly condensed, stable and inactive complex. The sequence is that of Sperm protamine P1 (PRM1) from Wallabia bicolor (Swamp wallaby).